The following is a 461-amino-acid chain: D-phenylhydantoinase (461 aa).

A divalent metal cation-binding residues include histidine 59, histidine 61, and lysine 151. Position 151 is an N6-carboxylysine (lysine 151). Tyrosine 156 contacts substrate. A divalent metal cation is bound by residues histidine 182 and histidine 239. Serine 286 contributes to the substrate binding site. Aspartate 313 is a binding site for a divalent metal cation. Asparagine 335 contacts substrate.

Belongs to the metallo-dependent hydrolases superfamily. Hydantoinase/dihydropyrimidinase family. As to quaternary structure, homotetramer. A divalent metal cation serves as cofactor. Carboxylation allows a single lysine to coordinate two divalent metal cations.

The enzyme catalyses D-5-phenylhydantoin + H2O = N-carbamoyl-D-phenylglycine + H(+). Its function is as follows. Catalyzes the stereospecific hydrolysis of the cyclic amide bond of D-hydantoin derivatives with an aromatic side chains at the 5'-position. Has no activity on dihydropyrimidines. The physiological function is unknown. In Escherichia coli O127:H6 (strain E2348/69 / EPEC), this protein is D-phenylhydantoinase.